We begin with the raw amino-acid sequence, 685 residues long: DNA ligase (685 aa).

NAD(+) is bound by residues 48-52 (DAEYD), 97-98 (SL), and glutamate 131. Residue lysine 133 is the N6-AMP-lysine intermediate of the active site. Arginine 154, glutamate 190, lysine 304, and lysine 328 together coordinate NAD(+). The Zn(2+) site is built by cysteine 422, cysteine 425, cysteine 440, and cysteine 445. One can recognise a BRCT domain in the interval 603 to 685 (PEEGPLSGRR…RLLSGEERPG (83 aa)).

It belongs to the NAD-dependent DNA ligase family. LigA subfamily. The cofactor is Mg(2+). Requires Mn(2+) as cofactor.

The catalysed reaction is NAD(+) + (deoxyribonucleotide)n-3'-hydroxyl + 5'-phospho-(deoxyribonucleotide)m = (deoxyribonucleotide)n+m + AMP + beta-nicotinamide D-nucleotide.. Its function is as follows. DNA ligase that catalyzes the formation of phosphodiester linkages between 5'-phosphoryl and 3'-hydroxyl groups in double-stranded DNA using NAD as a coenzyme and as the energy source for the reaction. It is essential for DNA replication and repair of damaged DNA. The chain is DNA ligase from Rubrobacter xylanophilus (strain DSM 9941 / JCM 11954 / NBRC 16129 / PRD-1).